The primary structure comprises 182 residues: ATP-dependent protease subunit HslV (182 aa).

Residue T7 is part of the active site. The Na(+) site is built by G162, C165, and T168.

Belongs to the peptidase T1B family. HslV subfamily. A double ring-shaped homohexamer of HslV is capped on each side by a ring-shaped HslU homohexamer. The assembly of the HslU/HslV complex is dependent on binding of ATP.

It is found in the cytoplasm. It carries out the reaction ATP-dependent cleavage of peptide bonds with broad specificity.. With respect to regulation, allosterically activated by HslU binding. In terms of biological role, protease subunit of a proteasome-like degradation complex believed to be a general protein degrading machinery. This is ATP-dependent protease subunit HslV from Legionella pneumophila (strain Lens).